Reading from the N-terminus, the 157-residue chain is Lipoprotein signal peptidase (157 aa).

4 helical membrane passes run 10 to 30 (LVFM…KYAI), 38 to 58 (SLMV…LLSF), 59 to 79 (LEGG…IFLI), and 84 to 104 (LFKT…SNVL). Active-site residues include D114 and D131. A helical membrane pass occupies residues 122–142 (FDFAIFNFADVMIDVGVGVLL).

Belongs to the peptidase A8 family.

The protein localises to the cell inner membrane. It carries out the reaction Release of signal peptides from bacterial membrane prolipoproteins. Hydrolyzes -Xaa-Yaa-Zaa-|-(S,diacylglyceryl)Cys-, in which Xaa is hydrophobic (preferably Leu), and Yaa (Ala or Ser) and Zaa (Gly or Ala) have small, neutral side chains.. Its pathway is protein modification; lipoprotein biosynthesis (signal peptide cleavage). In terms of biological role, this protein specifically catalyzes the removal of signal peptides from prolipoproteins. In Helicobacter pylori (strain HPAG1), this protein is Lipoprotein signal peptidase.